The primary structure comprises 179 residues: Transcription factor 21 (179 aa).

Residues 20-86 (CDGIKLDPNK…KQVQRNAANA (67 aa)) form a disordered region. Residues 34 to 46 (SNDSNEESSTCDN) show a composition bias toward polar residues. Positions 50 to 64 (KKGRGTSGKRRKASS) are enriched in basic residues. The segment covering 70–80 (GTINQEGKQVQ) has biased composition (polar residues). One can recognise a bHLH domain in the interval 79–131 (VQRNAANARERARMRVLSKAFSRLKTTLPWVPPDTKLSKLDTLRLASSYIAHL).

Efficient DNA binding requires dimerization with another bHLH protein. As to expression, at the start of neurulation (stage 13), expressed in the pronephros. At tailbud stage (stage 25-28), expression is high in the anterior-most branchial arch and pronephric glomus. At stage 40, staining persists in the glomus and in the epicardium region of the heart, and at stage 42, expression is higher in the glomus than in the kidney tubule or duct. In adults, expression is highest in the rectum and the spleen, with significant expression in the duodenum, heart, kidney, lungs, pancreas, skin, liver and muscle.

The protein resides in the nucleus. In terms of biological role, involved in epithelial-mesenchymal interactions in kidney and lung morphogenesis that include epithelial differentiation and branching morphogenesis. The protein is Transcription factor 21 (tcf21) of Xenopus laevis (African clawed frog).